The chain runs to 152 residues: Nucleoside diphosphate kinase (152 aa).

Positions 11, 59, 87, 93, 104, and 114 each coordinate ATP. H117 functions as the Pros-phosphohistidine intermediate in the catalytic mechanism.

The protein belongs to the NDK family. Homotetramer. Requires Mg(2+) as cofactor.

It is found in the cytoplasm. The catalysed reaction is a 2'-deoxyribonucleoside 5'-diphosphate + ATP = a 2'-deoxyribonucleoside 5'-triphosphate + ADP. The enzyme catalyses a ribonucleoside 5'-diphosphate + ATP = a ribonucleoside 5'-triphosphate + ADP. Its function is as follows. Major role in the synthesis of nucleoside triphosphates other than ATP. The ATP gamma phosphate is transferred to the NDP beta phosphate via a ping-pong mechanism, using a phosphorylated active-site intermediate. The polypeptide is Nucleoside diphosphate kinase (Prochlorococcus marinus (strain MIT 9301)).